Reading from the N-terminus, the 78-residue chain is Polcalcin Phl p 7 (78 aa).

2 EF-hand domains span residues 1 to 35 (MADD…LGST) and 35 to 70 (TSAD…NPGL). Positions 13, 15, 17, 19, 24, 48, 50, 52, and 59 each coordinate Ca(2+).

Monomer. As to expression, specifically expressed in pollen.

In terms of biological role, may be involved in the regulation of pollen-tube growth. The polypeptide is Polcalcin Phl p 7 (Phleum pratense (Common timothy)).